The primary structure comprises 125 residues: Large ribosomal subunit protein bL12 (125 aa).

Belongs to the bacterial ribosomal protein bL12 family. Homodimer. Part of the ribosomal stalk of the 50S ribosomal subunit. Forms a multimeric L10(L12)X complex, where L10 forms an elongated spine to which 2 to 4 L12 dimers bind in a sequential fashion. Binds GTP-bound translation factors.

In terms of biological role, forms part of the ribosomal stalk which helps the ribosome interact with GTP-bound translation factors. Is thus essential for accurate translation. This is Large ribosomal subunit protein bL12 from Rickettsia typhi (strain ATCC VR-144 / Wilmington).